We begin with the raw amino-acid sequence, 393 residues long: NAD(P)H-quinone oxidoreductase subunit H, chloroplastic (393 aa).

It belongs to the complex I 49 kDa subunit family. As to quaternary structure, NDH is composed of at least 16 different subunits, 5 of which are encoded in the nucleus.

The protein localises to the plastid. Its subcellular location is the chloroplast thylakoid membrane. It carries out the reaction a plastoquinone + NADH + (n+1) H(+)(in) = a plastoquinol + NAD(+) + n H(+)(out). It catalyses the reaction a plastoquinone + NADPH + (n+1) H(+)(in) = a plastoquinol + NADP(+) + n H(+)(out). Its function is as follows. NDH shuttles electrons from NAD(P)H:plastoquinone, via FMN and iron-sulfur (Fe-S) centers, to quinones in the photosynthetic chain and possibly in a chloroplast respiratory chain. The immediate electron acceptor for the enzyme in this species is believed to be plastoquinone. Couples the redox reaction to proton translocation, and thus conserves the redox energy in a proton gradient. The sequence is that of NAD(P)H-quinone oxidoreductase subunit H, chloroplastic from Cucumis sativus (Cucumber).